A 136-amino-acid polypeptide reads, in one-letter code: NADPH-dependent 7-cyano-7-deazaguanine reductase (136 aa).

C53 functions as the Thioimide intermediate in the catalytic mechanism. The active-site Proton donor is the D60. Residues 75–77 (VEL) and 94–95 (HE) contribute to the substrate site.

It belongs to the GTP cyclohydrolase I family. QueF type 1 subfamily.

It localises to the cytoplasm. The catalysed reaction is 7-aminomethyl-7-carbaguanine + 2 NADP(+) = 7-cyano-7-deazaguanine + 2 NADPH + 3 H(+). Its pathway is tRNA modification; tRNA-queuosine biosynthesis. Catalyzes the NADPH-dependent reduction of 7-cyano-7-deazaguanine (preQ0) to 7-aminomethyl-7-deazaguanine (preQ1). The protein is NADPH-dependent 7-cyano-7-deazaguanine reductase of Trichormus variabilis (strain ATCC 29413 / PCC 7937) (Anabaena variabilis).